We begin with the raw amino-acid sequence, 248 residues long: 3-deoxy-manno-octulosonate cytidylyltransferase (248 aa).

This sequence belongs to the KdsB family.

It localises to the cytoplasm. The catalysed reaction is 3-deoxy-alpha-D-manno-oct-2-ulosonate + CTP = CMP-3-deoxy-beta-D-manno-octulosonate + diphosphate. Its pathway is nucleotide-sugar biosynthesis; CMP-3-deoxy-D-manno-octulosonate biosynthesis; CMP-3-deoxy-D-manno-octulosonate from 3-deoxy-D-manno-octulosonate and CTP: step 1/1. It functions in the pathway bacterial outer membrane biogenesis; lipopolysaccharide biosynthesis. Activates KDO (a required 8-carbon sugar) for incorporation into bacterial lipopolysaccharide in Gram-negative bacteria. The sequence is that of 3-deoxy-manno-octulosonate cytidylyltransferase from Alteromonas mediterranea (strain DSM 17117 / CIP 110805 / LMG 28347 / Deep ecotype).